The chain runs to 401 residues: NADH-quinone oxidoreductase subunit D (401 aa).

Belongs to the complex I 49 kDa subunit family. As to quaternary structure, NDH-1 is composed of 14 different subunits. Subunits NuoB, C, D, E, F, and G constitute the peripheral sector of the complex.

The protein localises to the cell inner membrane. It catalyses the reaction a quinone + NADH + 5 H(+)(in) = a quinol + NAD(+) + 4 H(+)(out). NDH-1 shuttles electrons from NADH, via FMN and iron-sulfur (Fe-S) centers, to quinones in the respiratory chain. The immediate electron acceptor for the enzyme in this species is believed to be ubiquinone. Couples the redox reaction to proton translocation (for every two electrons transferred, four hydrogen ions are translocated across the cytoplasmic membrane), and thus conserves the redox energy in a proton gradient. This Rhodopseudomonas palustris (strain HaA2) protein is NADH-quinone oxidoreductase subunit D.